The primary structure comprises 377 residues: MRANCSSGLACPANSSEEELPEGLKAFGNLDLVFTVVSALMIGLLMFSLGCSVEVQKLWGHIRRPWGIAVGMLCQFGLMPLIAYLLIISFSLKPLQAIAVLIMGCCPGGTVSNIFTFWVDGDMDLSISMTTCSTMAALGMMPLCLYLYTLSWNLEQNLTIPYQNIGITLVCLIIPVAFGIYVNYRWPKQSKIILKIGAIAGGLLFLVVTGAGMVLMKEFWSSDIILLMISFIFPLIGHATGFLLALLTHQSWQRCRTISLETGTQNVQMCFTMLQLSFTAEQLVQIFGFVLAYGLFQMLNGFFMVAAYKMYKRRLKNKHGNEKPSCQEARHRKKSTSPKETTAFLEVNEEATLSPGPSGPVDPHGAPTPTGDIARAK.

The Extracellular segment spans residues 1–29 (MRANCSSGLACPANSSEEELPEGLKAFGN). Asparagine 4 is a glycosylation site (N-linked (GlcNAc...) asparagine). The helical transmembrane segment at 30 to 50 (LDLVFTVVSALMIGLLMFSLG) threads the bilayer. Residues 51-67 (CSVEVQKLWGHIRRPWG) lie on the Cytoplasmic side of the membrane. Residues 68 to 88 (IAVGMLCQFGLMPLIAYLLII) traverse the membrane as a helical segment. At 89–97 (SFSLKPLQA) the chain is on the extracellular side. A helical membrane pass occupies residues 98–118 (IAVLIMGCCPGGTVSNIFTFW). At 119–133 (VDGDMDLSISMTTCS) the chain is on the cytoplasmic side. A helical membrane pass occupies residues 134–154 (TMAALGMMPLCLYLYTLSWNL). Residues 155 to 159 (EQNLT) lie on the Extracellular side of the membrane. Asparagine 157 carries N-linked (GlcNAc...) asparagine glycosylation. Residues 160–180 (IPYQNIGITLVCLIIPVAFGI) form a helical membrane-spanning segment. The Cytoplasmic portion of the chain corresponds to 181-195 (YVNYRWPKQSKIILK). A helical membrane pass occupies residues 196-216 (IGAIAGGLLFLVVTGAGMVLM). Residues 217-223 (KEFWSSD) lie on the Extracellular side of the membrane. A helical transmembrane segment spans residues 224–244 (IILLMISFIFPLIGHATGFLL). Over 245 to 257 (ALLTHQSWQRCRT) the chain is Cytoplasmic. The helical transmembrane segment at 258–278 (ISLETGTQNVQMCFTMLQLSF) threads the bilayer. Topologically, residues 279–285 (TAEQLVQ) are extracellular. The chain crosses the membrane as a helical span at residues 286 to 306 (IFGFVLAYGLFQMLNGFFMVA). Over 307–377 (AYKMYKRRLK…TPTGDIARAK (71 aa)) the chain is Cytoplasmic. Positions 319-377 (HGNEKPSCQEARHRKKSTSPKETTAFLEVNEEATLSPGPSGPVDPHGAPTPTGDIARAK) are disordered.

Belongs to the bile acid:sodium symporter (BASS) (TC 2.A.28) family. Post-translationally, glycosylated.

Its subcellular location is the membrane. It catalyses the reaction estrone 3-sulfate(out) + 2 Na(+)(out) = estrone 3-sulfate(in) + 2 Na(+)(in). The catalysed reaction is 17beta-estradiol 3-sulfate(out) + 2 Na(+)(out) = 17beta-estradiol 3-sulfate(in) + 2 Na(+)(in). It carries out the reaction dehydroepiandrosterone 3-sulfate(out) + 2 Na(+)(out) = dehydroepiandrosterone 3-sulfate(in) + 2 Na(+)(in). The enzyme catalyses androst-5-ene-diol 3-sulfate(out) + 2 Na(+)(out) = androst-5-ene-diol 3-sulfate(in) + 2 Na(+)(in). It catalyses the reaction pregnenolone sulfate(out) + 2 Na(+)(out) = pregnenolone sulfate(in) + 2 Na(+)(in). The catalysed reaction is taurolithocholate 3-sulfate(out) + 2 Na(+)(out) = taurolithocholate 3-sulfate(in) + 2 Na(+)(in). It carries out the reaction androsterone 3alpha-sulfate(out) + 2 Na(+)(out) = androsterone 3alpha-sulfate(in) + 2 Na(+)(in). The enzyme catalyses 5alpha-dihydrotestosterone sulfate(out) + 2 Na(+)(out) = 5alpha-dihydrotestosterone sulfate(in) + 2 Na(+)(in). It catalyses the reaction 17beta-estradiol 17-sulfate(out) + 2 Na(+)(out) = 17beta-estradiol 17-sulfate(in) + 2 Na(+)(in). The catalysed reaction is 17alpha-hydroxypregnenolone 3-sulfate(out) + 2 Na(+)(out) = 17alpha-hydroxypregnenolone 3-sulfate(in) + 2 Na(+)(in). It carries out the reaction epiandrosterone 3-sulfate(out) + 2 Na(+)(out) = epiandrosterone 3-sulfate(in) + 2 Na(+)(in). The enzyme catalyses epitestosterone 17-sulfate(out) + 2 Na(+)(out) = epitestosterone 17-sulfate(in) + 2 Na(+)(in). It catalyses the reaction testosterone 17-sulfate(out) + 2 Na(+)(out) = testosterone 17-sulfate(in) + 2 Na(+)(in). The catalysed reaction is 16alpha-hydroxydehydroepiandrosterone 3-sulfate(out) + 2 Na(+)(out) = 16alpha-hydroxydehydroepiandrosterone 3-sulfate(in) + 2 Na(+)(in). Functionally, transports sulfoconjugated steroid hormones from the extracellular compartment into the cytosol in a sodium-dependent manner without hydrolysis. Steroid sulfate hormones are commonly considered to be biologically inactive metabolites, that may be activated by steroid sulfatases into free steroids. May play an important role by delivering sulfoconjugated steroids to specific target cells in reproductive organs. May play a role transporting the estriol precursor 16alpha-hydroxydehydroepiandrosterone 3-sulfate (16a-OH-DHEAS) at the fetal blood vessel endothelium. Can also transport other sulfoconjugated molecules such as taurolithocholic acid-3-sulfate and sulfoconjugated pyrenes. In Bos taurus (Bovine), this protein is Sodium-dependent organic anion transporter (SLC10A6).